The primary structure comprises 284 residues: ATP phosphoribosyltransferase (284 aa).

Belongs to the ATP phosphoribosyltransferase family. Long subfamily. Requires Mg(2+) as cofactor.

Its subcellular location is the cytoplasm. It catalyses the reaction 1-(5-phospho-beta-D-ribosyl)-ATP + diphosphate = 5-phospho-alpha-D-ribose 1-diphosphate + ATP. It functions in the pathway amino-acid biosynthesis; L-histidine biosynthesis; L-histidine from 5-phospho-alpha-D-ribose 1-diphosphate: step 1/9. With respect to regulation, feedback inhibited by histidine. In terms of biological role, catalyzes the condensation of ATP and 5-phosphoribose 1-diphosphate to form N'-(5'-phosphoribosyl)-ATP (PR-ATP). Has a crucial role in the pathway because the rate of histidine biosynthesis seems to be controlled primarily by regulation of HisG enzymatic activity. This is ATP phosphoribosyltransferase from Corynebacterium kroppenstedtii (strain DSM 44385 / JCM 11950 / CIP 105744 / CCUG 35717).